Reading from the N-terminus, the 123-residue chain is Small ribosomal subunit protein uS12c (123 aa).

It belongs to the universal ribosomal protein uS12 family. Part of the 30S ribosomal subunit.

It localises to the plastid. The protein localises to the chloroplast. With S4 and S5 plays an important role in translational accuracy. Located at the interface of the 30S and 50S subunits. The chain is Small ribosomal subunit protein uS12c (rps12) from Physcomitrium patens (Spreading-leaved earth moss).